A 373-amino-acid chain; its full sequence is Lipoyl amidotransferase LIPT1, mitochondrial (373 aa).

The transit peptide at 1-25 (MLIPFSMKNCFQLLCNLKVPAAGFK) directs the protein to the mitochondrion. The BPL/LPL catalytic domain maps to 57-243 (LEGKPVLFLW…EYATSHQIDN (187 aa)). (R)-lipoyl-5'-AMP contacts are provided by Y107, R151, K161, T179, T208, and A210.

Belongs to the LplA family.

The protein localises to the mitochondrion. It catalyses the reaction N(6)-[(R)-lipoyl]-L-lysyl-[glycine-cleavage complex H protein] + L-lysyl-[lipoyl-carrier protein] = L-lysyl-[glycine-cleavage complex H protein] + N(6)-[(R)-lipoyl]-L-lysyl-[lipoyl-carrier protein]. The enzyme catalyses (R)-lipoyl-5'-AMP + L-lysyl-[lipoyl-carrier protein] = N(6)-[(R)-lipoyl]-L-lysyl-[lipoyl-carrier protein] + AMP + 2 H(+). It participates in protein modification; protein lipoylation via exogenous pathway; protein N(6)-(lipoyl)lysine from lipoate: step 2/2. Inhibited by lipoyl-AMP analogs including hexanoyl-, octanoyl- and decanoyl-AMP. Its function is as follows. Lipoyl amidotransferase that catalyzes the transfer of lipoyl moieties from lipoyl-protein H of the glycine cleavage system (lipoyl-GCSH) to E2 subunits of the pyruvate dehydrogenase complex (PDCE2). Unable to catalyze the transfer of octanoyl from octanoyl-GCSH to PDCE2. In vitro, it is also able to catalyze the transfer of the lipoyl group from lipoyl-AMP to the specific lysine residue of lipoyl domains of lipoate-dependent enzymes but this reaction may not be physiologically relevant. The polypeptide is Lipoyl amidotransferase LIPT1, mitochondrial (LIPT1) (Bos taurus (Bovine)).